We begin with the raw amino-acid sequence, 380 residues long: Homoserine O-succinyltransferase (380 aa).

An AB hydrolase-1 domain is found at 49–357 (NAILICHALS…ESTHGHDAFL (309 aa)). Ser155 (nucleophile) is an active-site residue. Arg225 serves as a coordination point for substrate. Catalysis depends on residues Asp320 and His353. Substrate is bound at residue Asp354.

It belongs to the AB hydrolase superfamily. MetX family. As to quaternary structure, homodimer.

The protein localises to the cytoplasm. The catalysed reaction is L-homoserine + succinyl-CoA = O-succinyl-L-homoserine + CoA. It functions in the pathway amino-acid biosynthesis; L-methionine biosynthesis via de novo pathway; O-succinyl-L-homoserine from L-homoserine: step 1/1. Functionally, transfers a succinyl group from succinyl-CoA to L-homoserine, forming succinyl-L-homoserine. The protein is Homoserine O-succinyltransferase of Laribacter hongkongensis (strain HLHK9).